The chain runs to 820 residues: Mediator of RNA polymerase II transcription subunit 16 (820 aa).

3 WD repeats span residues 74 to 114 (SNKY…SEWK), 621 to 665 (RSFM…PVFS), and 757 to 811 (SNDN…KCRC).

This sequence belongs to the Mediator complex subunit 16 family. In terms of assembly, component of the Mediator complex.

Its subcellular location is the nucleus. Functionally, component of the Mediator complex, a coactivator involved in the regulated transcription of nearly all RNA polymerase II-dependent genes. Mediator functions as a bridge to convey information from gene-specific regulatory proteins to the basal RNA polymerase II transcription machinery. Mediator is recruited to promoters by direct interactions with regulatory proteins and serves as a scaffold for the assembly of a functional preinitiation complex with RNA polymerase II and the general transcription factors. In Aedes aegypti (Yellowfever mosquito), this protein is Mediator of RNA polymerase II transcription subunit 16 (MED16).